Reading from the N-terminus, the 103-residue chain is Small ribosomal subunit protein uS10 (103 aa).

It belongs to the universal ribosomal protein uS10 family. In terms of assembly, part of the 30S ribosomal subunit.

Functionally, involved in the binding of tRNA to the ribosomes. This chain is Small ribosomal subunit protein uS10, found in Aliivibrio fischeri (strain ATCC 700601 / ES114) (Vibrio fischeri).